We begin with the raw amino-acid sequence, 253 residues long: Small ribosomal subunit protein uS3 (253 aa).

The KH type-2 domain maps to 38–106 (IRKYIHARLS…EVQINIFEIK (69 aa)). Residues 216–253 (AGMDKKQAGQGGGKGGDSPRGDRKPFNKGGKPDARKRK) form a disordered region. The span at 232 to 253 (DSPRGDRKPFNKGGKPDARKRK) shows a compositional bias: basic and acidic residues.

This sequence belongs to the universal ribosomal protein uS3 family. As to quaternary structure, part of the 30S ribosomal subunit. Forms a tight complex with proteins S10 and S14.

Functionally, binds the lower part of the 30S subunit head. Binds mRNA in the 70S ribosome, positioning it for translation. This is Small ribosomal subunit protein uS3 from Flavobacterium psychrophilum (strain ATCC 49511 / DSM 21280 / CIP 103535 / JIP02/86).